The chain runs to 763 residues: Sphingoid long-chain bases kinase 1 (763 aa).

The segment at 34–81 (TGGSQQSSPIVFPEKRNKKVKASSRRGEVTNDPQVKPKPDEHRIDIGG) is disordered. Positions 58 to 81 (RRGEVTNDPQVKPKPDEHRIDIGG) are enriched in basic and acidic residues. Positions 245–384 (KSAPKMLVIL…TDVFAVEWIH (140 aa)) constitute a DAGKc domain. ATP-binding positions include 255 to 257 (NPR) and T287. 313 to 316 (GGDG) is a substrate binding site. The active-site Proton donor/acceptor is the D315. ATP is bound by residues E320, 345-347 (GSD), and R418. A disordered region spans residues 561-603 (MGLTSVQDPPTRCSWGNTGGQDREDISSTVSDPGPIWDAGPKW). 733–735 (DGE) provides a ligand contact to ATP.

In terms of tissue distribution, expressed in roots, stems, leaves and at higher levels in flowers.

Its function is as follows. Involved in the production of sphingolipid metabolites. Active on sphingosine, phytosphingosine (PHS, 4-hydroxysphinganine), D-erythro-dihydrosphingosine, D-erythro-sphingosine and trans-4, trans-8-sphingadienine, an LCB found exclusively in plants, but not on N-acetyl-dihydrosphingosine (C2-dihydroceramide) and D-threo-dihydrosphingosine. The protein is Sphingoid long-chain bases kinase 1 (LCBK1) of Arabidopsis thaliana (Mouse-ear cress).